The chain runs to 130 residues: Fluoride-specific ion channel FluC (130 aa).

The next 4 membrane-spanning stretches (helical) occupy residues Leu9–Leu29, Tyr39–Ala59, Leu71–Val91, and Val104–Ile124. 2 residues coordinate Na(+): Gly79 and Thr82.

This sequence belongs to the fluoride channel Fluc/FEX (TC 1.A.43) family.

The protein localises to the cell inner membrane. It catalyses the reaction fluoride(in) = fluoride(out). Its activity is regulated as follows. Na(+) is not transported, but it plays an essential structural role and its presence is essential for fluoride channel function. Its function is as follows. Fluoride-specific ion channel. Important for reducing fluoride concentration in the cell, thus reducing its toxicity. This Synechocystis sp. (strain ATCC 27184 / PCC 6803 / Kazusa) protein is Fluoride-specific ion channel FluC.